A 203-amino-acid polypeptide reads, in one-letter code: E3 ubiquitin-protein ligase RNF152 (203 aa).

The segment at 12 to 55 (CQICFNYYSPRRRPKLLDCKHTCCSVCLQQMRTSQKDLRCPWCR) adopts an RING-type zinc-finger fold. A helical transmembrane segment spans residues 167–187 (SGVCTVILVACVLVFLLGIVL).

The protein belongs to the RNF152 family.

The protein localises to the lysosome membrane. The catalysed reaction is S-ubiquitinyl-[E2 ubiquitin-conjugating enzyme]-L-cysteine + [acceptor protein]-L-lysine = [E2 ubiquitin-conjugating enzyme]-L-cysteine + N(6)-ubiquitinyl-[acceptor protein]-L-lysine.. It functions in the pathway protein modification; protein ubiquitination. Functionally, E3 ubiquitin-protein ligase that acts as a negative regulator of mTORC1 signaling by mediating ubiquitination of RagA/RRAGA and RHEB. Catalyzes 'Lys-63'-linked polyubiquitination of RagA/RRAGA in response to amino acid starvation, thereby regulating mTORC1 signaling. Also mediates monoubiquitination of RHEB, promoting its association with the TSC-TBC complex and subsequent inhibition. Also mediates 'Lys-48'-linked polyubiquitination of target proteins and their subsequent targeting to the proteasome for degradation. This is E3 ubiquitin-protein ligase RNF152 from Gallus gallus (Chicken).